The chain runs to 496 residues: 1-aminocyclopropane-1-carboxylate synthase 2 (496 aa).

The substrate site is built by E55 and Y93. K279 is modified (N6-(pyridoxal phosphate)lysine). 3 positions are modified to phosphoserine: S483, S488, and S491.

This sequence belongs to the class-I pyridoxal-phosphate-dependent aminotransferase family. As to quaternary structure, homodimer and heterodimer. In vivo, the relevance of heterodimerization with other ACS enzymes is however unsure. Interacts with GRF3. Requires pyridoxal 5'-phosphate as cofactor. Phosphorylated on serine residue by MAP kinase (MPK6). Post-translationally, may be processed at its C-terminus. In terms of tissue distribution, high in developing leaves and in flowers. Expressed in roots and siliques.

It catalyses the reaction S-adenosyl-L-methionine = 1-aminocyclopropane-1-carboxylate + S-methyl-5'-thioadenosine + H(+). Its pathway is alkene biosynthesis; ethylene biosynthesis via S-adenosyl-L-methionine; ethylene from S-adenosyl-L-methionine: step 1/2. In terms of biological role, 1-aminocyclopropane-1-carboxylate synthase (ACS) enzymes catalyze the conversion of S-adenosyl-L-methionine (SAM) into 1-aminocyclopropane-1-carboxylate (ACC), a direct precursor of ethylene. In Arabidopsis thaliana (Mouse-ear cress), this protein is 1-aminocyclopropane-1-carboxylate synthase 2 (ACS2).